The primary structure comprises 134 residues: Ribonuclease VapC1 (134 aa).

The PINc domain occupies Y3–W132. Mg(2+) is bound by residues D6 and D99.

This sequence belongs to the PINc/VapC protein family. Forms a complex with VapB1. Mg(2+) serves as cofactor.

In terms of biological role, toxic component of a type II toxin-antitoxin (TA) system. Upon expression in E.coli inhibits growth in liquid culture. Its toxic effect is neutralized by coexpression with antitoxin VapB1. Degrades RNA but not ss- or ds-DNA in vitro, degradation is inhibited by VapB1 antitoxin. The protein is Ribonuclease VapC1 of Haemophilus influenzae (strain R2866).